The chain runs to 187 residues: Homeobox protein engrailed-like ceh-16 (187 aa).

3 disordered regions span residues Pro14–Pro43, Ser60–Asp100, and Lys144–Ile167. Over residues Pro20–Pro39 the composition is skewed to low complexity. A DNA-binding region (homeobox) is located at residues Glu87–Thr146. Positions Ser145–Asn163 are enriched in polar residues.

This sequence belongs to the engrailed homeobox family. Expressed in seam cells.

The protein resides in the nucleus. The protein localises to the cytoplasm. Functionally, transcriptional regulator which binds to DNA to regulate gene expression and promote seam cell development and differentiation during embryogenesis. Plays a role in maintaining the boundaries between the lateral rows of seam cells and the ventral and dorsal row of epidermal cells during embryonic development. Negatively regulates the expression of the fusion effector protein eff-1 to prevent seam cell fusion with the dorsal and ventral epidermal cells during embryonic elongation. Positively regulates seam cell self-renewal and expansion during the L2 larval stage to promote seam cell development. This role does not seem to be via regulation of eff-1 expression. Specifically, it is required for the asymmetric division of the V5.p seam cell during the L2 larval stage, and in turn the asymmetric nuclear distribution of pop-1 in V5.p daughter cells. This Caenorhabditis elegans protein is Homeobox protein engrailed-like ceh-16.